The primary structure comprises 469 residues: Probable Xaa-Pro aminopeptidase PEPP (469 aa).

D257, D268, E391, and E436 together coordinate Mn(2+).

Belongs to the peptidase M24B family. Mn(2+) serves as cofactor.

The enzyme catalyses Release of any N-terminal amino acid, including proline, that is linked to proline, even from a dipeptide or tripeptide.. Its function is as follows. Catalyzes the removal of a penultimate prolyl residue from the N-termini of peptides. In Fusarium vanettenii (strain ATCC MYA-4622 / CBS 123669 / FGSC 9596 / NRRL 45880 / 77-13-4) (Fusarium solani subsp. pisi), this protein is Probable Xaa-Pro aminopeptidase PEPP (PEPP).